The primary structure comprises 887 residues: Protein PTHB1 (887 aa).

The segment at 1 to 407 (MSLFKARDWW…SQGVWPMTER (407 aa)) is seven-bladed beta-propeller. Residues 685–765 (KDKTPAPLQH…FLPLQEDTQE (81 aa)) are interaction with LZTL1. The interval 850–887 (DLEERSVEQDSTELFTNHRHLTAETPRPEVSPLQGVSE) is disordered.

In terms of assembly, part of BBSome complex, that contains BBS1, BBS2, BBS4, BBS5, BBS7, BBS8/TTC8, BBS9 and BBIP10. Interacts with LZTL1; the interaction mediates the association of LZTL1 with the BBsome complex and regulates BBSome ciliary trafficking. As to expression, widely expressed. Expressed in adult heart, skeletal muscle, lung, liver, kidney, placenta and brain, and in fetal kidney, lung, liver and brain.

Its subcellular location is the cytoplasm. The protein resides in the cytoskeleton. It localises to the microtubule organizing center. It is found in the centrosome. The protein localises to the cell projection. Its subcellular location is the cilium membrane. The protein resides in the centriolar satellite. The BBSome complex is thought to function as a coat complex required for sorting of specific membrane proteins to the primary cilia. The BBSome complex is required for ciliogenesis but is dispensable for centriolar satellite function. This ciliogenic function is mediated in part by the Rab8 GDP/GTP exchange factor, which localizes to the basal body and contacts the BBSome. Rab8(GTP) enters the primary cilium and promotes extension of the ciliary membrane. Firstly the BBSome associates with the ciliary membrane and binds to RAB3IP/Rabin8, the guanosyl exchange factor (GEF) for Rab8 and then the Rab8-GTP localizes to the cilium and promotes docking and fusion of carrier vesicles to the base of the ciliary membrane. Required for proper BBSome complex assembly and its ciliary localization. This Homo sapiens (Human) protein is Protein PTHB1 (BBS9).